We begin with the raw amino-acid sequence, 504 residues long: uncharacterized protein (504 aa).

A propeptide spanning residues 1 to 212 is cleaved from the precursor; sequence MFMKSKAAGS…LYKTQDPVLD (212 aa).

This is an uncharacterized protein from Deinococcus radiodurans (strain ATCC 13939 / DSM 20539 / JCM 16871 / CCUG 27074 / LMG 4051 / NBRC 15346 / NCIMB 9279 / VKM B-1422 / R1).